Here is a 175-residue protein sequence, read N- to C-terminus: Adenylyl-sulfate kinase (175 aa).

Gly-12–Thr-19 lines the ATP pocket. Ser-86 acts as the Phosphoserine intermediate in catalysis.

This sequence belongs to the APS kinase family.

It carries out the reaction adenosine 5'-phosphosulfate + ATP = 3'-phosphoadenylyl sulfate + ADP + H(+). It participates in sulfur metabolism; hydrogen sulfide biosynthesis; sulfite from sulfate: step 2/3. Its function is as follows. Catalyzes the synthesis of activated sulfate. This chain is Adenylyl-sulfate kinase, found in Synechococcus sp. (strain JA-2-3B'a(2-13)) (Cyanobacteria bacterium Yellowstone B-Prime).